The chain runs to 395 residues: Lipoyl synthase, mitochondrial (395 aa).

The transit peptide at 1–14 (MISLRSISRSPAVQ) directs the protein to the mitochondrion. C112, C117, C123, C142, C146, C149, and S357 together coordinate [4Fe-4S] cluster. The Radical SAM core domain maps to 127 to 346 (KKSEATATIM…RDTALQMGFL (220 aa)).

It belongs to the radical SAM superfamily. Lipoyl synthase family. [4Fe-4S] cluster is required as a cofactor.

The protein resides in the mitochondrion. It carries out the reaction [[Fe-S] cluster scaffold protein carrying a second [4Fe-4S](2+) cluster] + N(6)-octanoyl-L-lysyl-[protein] + 2 oxidized [2Fe-2S]-[ferredoxin] + 2 S-adenosyl-L-methionine + 4 H(+) = [[Fe-S] cluster scaffold protein] + N(6)-[(R)-dihydrolipoyl]-L-lysyl-[protein] + 4 Fe(3+) + 2 hydrogen sulfide + 2 5'-deoxyadenosine + 2 L-methionine + 2 reduced [2Fe-2S]-[ferredoxin]. Its pathway is protein modification; protein lipoylation via endogenous pathway; protein N(6)-(lipoyl)lysine from octanoyl-[acyl-carrier-protein]: step 2/2. Functionally, catalyzes the radical-mediated insertion of two sulfur atoms into the C-6 and C-8 positions of the octanoyl moiety bound to the lipoyl domains of lipoate-dependent enzymes, thereby converting the octanoylated domains into lipoylated derivatives. The chain is Lipoyl synthase, mitochondrial from Debaryomyces hansenii (strain ATCC 36239 / CBS 767 / BCRC 21394 / JCM 1990 / NBRC 0083 / IGC 2968) (Yeast).